Consider the following 328-residue polypeptide: DNA-directed RNA polymerase subunit alpha (328 aa).

The tract at residues 1–234 (MQGSVTEFLK…EQLDAFVDLR (234 aa)) is alpha N-terminal domain (alpha-NTD). Residues 248–328 (FXPILLRPVD…NWPPASIAED (81 aa)) are alpha C-terminal domain (alpha-CTD).

This sequence belongs to the RNA polymerase alpha chain family. In terms of assembly, homodimer. The RNAP catalytic core consists of 2 alpha, 1 beta, 1 beta' and 1 omega subunit. When a sigma factor is associated with the core the holoenzyme is formed, which can initiate transcription.

The enzyme catalyses RNA(n) + a ribonucleoside 5'-triphosphate = RNA(n+1) + diphosphate. Functionally, DNA-dependent RNA polymerase catalyzes the transcription of DNA into RNA using the four ribonucleoside triphosphates as substrates. The protein is DNA-directed RNA polymerase subunit alpha of Haemophilus influenzae (strain ATCC 51907 / DSM 11121 / KW20 / Rd).